Consider the following 919-residue polypeptide: Chitin synthase 1 (919 aa).

Disordered regions lie at residues 1 to 69 (MSYD…SFQT) and 109 to 134 (NLAS…ALGP). Over residues 11 to 30 (GQGRDYARQQRQQRSYQLSD) the composition is skewed to low complexity. Residues asparagine 187 and asparagine 556 are each glycosylated (N-linked (GlcNAc...) asparagine). Transmembrane regions (helical) follow at residues 594–614 (IVLL…SIII), 630–650 (LVVF…FLVL), 668–688 (IASF…SLWL), 713–733 (VLIA…ILYA), 742–762 (FPQY…YAFC), 843–863 (LVAF…NVNG), and 887–919 (IILW…FRKT).

It belongs to the chitin synthase family. Class III subfamily.

Its subcellular location is the cell membrane. It localises to the cytoplasmic vesicle membrane. The catalysed reaction is [(1-&gt;4)-N-acetyl-beta-D-glucosaminyl](n) + UDP-N-acetyl-alpha-D-glucosamine = [(1-&gt;4)-N-acetyl-beta-D-glucosaminyl](n+1) + UDP + H(+). Functionally, polymerizes chitin, a structural polymer of the cell wall and septum, by transferring the sugar moiety of UDP-GlcNAc to the non-reducing end of the growing chitin polymer. This chain is Chitin synthase 1, found in Mycosarcoma maydis (Corn smut fungus).